A 198-amino-acid polypeptide reads, in one-letter code: Small ribosomal subunit protein uS7 (198 aa).

It belongs to the universal ribosomal protein uS7 family. As to quaternary structure, part of the 30S ribosomal subunit.

One of the primary rRNA binding proteins, it binds directly to 16S rRNA where it nucleates assembly of the head domain of the 30S subunit. Is located at the subunit interface close to the decoding center. This chain is Small ribosomal subunit protein uS7, found in Nanoarchaeum equitans (strain Kin4-M).